We begin with the raw amino-acid sequence, 1254 residues long: Receptor tyrosine-protein kinase erbB-2 (1254 aa).

An N-terminal signal peptide occupies residues 1 to 22 (MELAAWCGWGLLLALLSPGASG). Over 23-652 (TQVCTGTDMK…PAEQRASPAT (630 aa)) the chain is Extracellular. Residues Cys-26 and Cys-53 are joined by a disulfide bond. N-linked (GlcNAc...) asparagine glycosylation is found at Asn-68, Asn-125, and Asn-187. Intrachain disulfides connect Cys-162–Cys-192, Cys-195–Cys-204, Cys-199–Cys-212, Cys-236–Cys-244, Cys-240–Cys-252, Cys-255–Cys-264, Cys-268–Cys-295, Cys-299–Cys-311, Cys-315–Cys-331, Cys-334–Cys-338, Cys-342–Cys-367, Cys-475–Cys-504, Cys-511–Cys-520, and Cys-515–Cys-528. Asn-259 is a glycosylation site (N-linked (GlcNAc...) asparagine). Asn-530 carries an N-linked (GlcNAc...) asparagine glycan. Cystine bridges form between Cys-531/Cys-540, Cys-544/Cys-560, Cys-563/Cys-576, Cys-567/Cys-584, Cys-587/Cys-596, Cys-600/Cys-623, Cys-626/Cys-634, and Cys-630/Cys-642. N-linked (GlcNAc...) asparagine glycosylation is present at Asn-571. N-linked (GlcNAc...) asparagine glycosylation occurs at Asn-629. Residues 653–675 (SIIATVVGILLFLVIGVVVGILI) form a helical membrane-spanning segment. A required for interaction with KPNB1 and EEA1 region spans residues 676–689 (KRRRQKIRKYTMRR). Residues 676 to 689 (KRRRQKIRKYTMRR) carry the Nuclear localization signal motif. The Cytoplasmic portion of the chain corresponds to 676-1254 (KRRRQKIRKY…PEYLGLDVPV (579 aa)). Positions 720-987 (LRKVKVLGSG…RMARDPQRFV (268 aa)) constitute a Protein kinase domain. ATP contacts are provided by residues 726–734 (LGSGAFGTV) and Lys-753. Residue Asp-845 is the Proton acceptor of the active site. Tyr-877 carries the post-translational modification Phosphotyrosine. Disordered regions lie at residues 1029–1116 (GFFF…SEDP) and 1133–1179 (CSPQ…GKNG). 4 positions are modified to phosphoserine: Ser-1054, Ser-1078, Ser-1083, and Ser-1107. The residue at position 1112 (Tyr-1112) is a Phosphotyrosine. Tyr-1139 is modified (phosphotyrosine; by autocatalysis). Residues 1146–1161 (RPQPPLTPEGPLPPVR) show a composition bias toward pro residues. At Thr-1166 the chain carries Phosphothreonine. The tract at residues 1195–1197 (EYL) is interaction with PIK3C2B. Phosphotyrosine is present on Tyr-1196. The disordered stretch occupies residues 1223-1254 (DQDPSERGSPPNTFEGTPTAENPEYLGLDVPV). Positions 1232–1242 (PPNTFEGTPTA) are enriched in polar residues. Tyr-1247 bears the Phosphotyrosine; by autocatalysis mark.

The protein belongs to the protein kinase superfamily. Tyr protein kinase family. EGF receptor subfamily. Homodimer. Heterodimer with EGFR, ERBB3 and ERBB4. Part of a complex with EGFR and either PIK3C2A or PIK3C2B. May interact with PIK3C2B when phosphorylated on Tyr-1196. Interacts with PRKCABP and PLXNB1. Interacts (when phosphorylated on Tyr-1247) with MEMO. Interacts with MUC1. Interacts (when phosphorylated on Tyr-1139) with GRB7 (via SH2 domain). Interacts (when phosphorylated on Tyr-1247) with ERBIN. Interacts with SRC, KPNB1, RANBP2, EEA1, CRM1, CLTC, PTK6, RPA194, MYOC and ACTB. Interacts (preferentially with the tyrosine phosphorylated form) with CPNE3; this interaction occurs at the cell membrane and is increased in a growth factor heregulin-dependent manner. Interacts with HSP90AA1 and HSP90AB1 in an ATP-dependent manner; the interaction suppresses ERBB2 kinase activity. Interacts with SORL1; this interaction regulates ERBB2 subcellular distribution by promoting its recycling after internalization from endosomes back to the plasma membrane, hence stimulates ERBB2-mediated signaling. Interacts with SH3BGRL. Interacts with ROR1. In terms of processing, autophosphorylated. Autophosphorylation occurs in trans, i.e. one subunit of the dimeric receptor phosphorylates tyrosine residues on the other subunit. Ligand-binding increases phosphorylation on tyrosine residues. Signaling via SEMA4C promotes phosphorylation at Tyr-1247. Dephosphorylated by PTPN12.

It localises to the cell membrane. The protein resides in the cell projection. It is found in the ruffle membrane. The protein localises to the early endosome. Its subcellular location is the cytoplasm. It localises to the perinuclear region. The protein resides in the nucleus. It carries out the reaction L-tyrosyl-[protein] + ATP = O-phospho-L-tyrosyl-[protein] + ADP + H(+). Its function is as follows. Protein tyrosine kinase that is part of several cell surface receptor complexes, but that apparently needs a coreceptor for ligand binding. Essential component of a neuregulin-receptor complex, although neuregulins do not interact with it alone. GP30 is a potential ligand for this receptor. Regulates outgrowth and stabilization of peripheral microtubules (MTs). Upon ERBB2 activation, the MEMO1-RHOA-DIAPH1 signaling pathway elicits the phosphorylation and thus the inhibition of GSK3B at cell membrane. This prevents the phosphorylation of APC and CLASP2, allowing its association with the cell membrane. In turn, membrane-bound APC allows the localization of MACF1 to the cell membrane, which is required for microtubule capture and stabilization. In the nucleus is involved in transcriptional regulation. Associates with the 5'-TCAAATTC-3' sequence in the PTGS2/COX-2 promoter and activates its transcription. Implicated in transcriptional activation of CDKN1A; the function involves STAT3 and SRC. Involved in the transcription of rRNA genes by RNA Pol I and enhances protein synthesis and cell growth. The sequence is that of Receptor tyrosine-protein kinase erbB-2 (ERBB2) from Mesocricetus auratus (Golden hamster).